Here is a 602-residue protein sequence, read N- to C-terminus: Elongation factor 4 (602 aa).

Residues 5–187 (DHIRNFAIIA…QIIVSLPAPE (183 aa)) enclose the tr-type G domain. GTP contacts are provided by residues 17–22 (DHGKST) and 134–137 (NKVD).

This sequence belongs to the TRAFAC class translation factor GTPase superfamily. Classic translation factor GTPase family. LepA subfamily.

Its subcellular location is the cell inner membrane. The catalysed reaction is GTP + H2O = GDP + phosphate + H(+). In terms of biological role, required for accurate and efficient protein synthesis under certain stress conditions. May act as a fidelity factor of the translation reaction, by catalyzing a one-codon backward translocation of tRNAs on improperly translocated ribosomes. Back-translocation proceeds from a post-translocation (POST) complex to a pre-translocation (PRE) complex, thus giving elongation factor G a second chance to translocate the tRNAs correctly. Binds to ribosomes in a GTP-dependent manner. This is Elongation factor 4 from Pelagibacter ubique (strain HTCC1062).